A 311-amino-acid polypeptide reads, in one-letter code: Cytosolic Fe-S cluster assembly factor Nubp1 homolog (311 aa).

The interval 1 to 20 is disordered; it reads MQAPPPEHCPGVESENAGKG. Residues Cys-9, Cys-23, Cys-26, and Cys-32 each coordinate [4Fe-4S] cluster. 63–70 is a binding site for ATP; that stretch reads GKGGVGKS. The [4Fe-4S] cluster site is built by Cys-240 and Cys-243.

Belongs to the Mrp/NBP35 ATP-binding proteins family. NUBP1/NBP35 subfamily. Heterotetramer of 2 Nubp1 and 2 Nubp2 chains. It depends on [4Fe-4S] cluster as a cofactor.

The protein localises to the cytoplasm. Functionally, component of the cytosolic iron-sulfur (Fe/S) protein assembly (CIA) machinery. Required for maturation of extramitochondrial Fe-S proteins. The Nubp1-Nubp2 heterotetramer forms a Fe-S scaffold complex, mediating the de novo assembly of an Fe-S cluster and its transfer to target apoproteins. This Drosophila simulans (Fruit fly) protein is Cytosolic Fe-S cluster assembly factor Nubp1 homolog.